The sequence spans 234 residues: Leucyl/phenylalanyl-tRNA--protein transferase (234 aa).

Belongs to the L/F-transferase family.

It is found in the cytoplasm. The enzyme catalyses N-terminal L-lysyl-[protein] + L-leucyl-tRNA(Leu) = N-terminal L-leucyl-L-lysyl-[protein] + tRNA(Leu) + H(+). The catalysed reaction is N-terminal L-arginyl-[protein] + L-leucyl-tRNA(Leu) = N-terminal L-leucyl-L-arginyl-[protein] + tRNA(Leu) + H(+). It carries out the reaction L-phenylalanyl-tRNA(Phe) + an N-terminal L-alpha-aminoacyl-[protein] = an N-terminal L-phenylalanyl-L-alpha-aminoacyl-[protein] + tRNA(Phe). Its function is as follows. Functions in the N-end rule pathway of protein degradation where it conjugates Leu, Phe and, less efficiently, Met from aminoacyl-tRNAs to the N-termini of proteins containing an N-terminal arginine or lysine. The polypeptide is Leucyl/phenylalanyl-tRNA--protein transferase (Shigella sonnei (strain Ss046)).